The following is a 922-amino-acid chain: Dual serine/threonine and tyrosine protein kinase (922 aa).

The region spanning 645 to 899 (PKLGRELGRG…PLLGIVEPSL (255 aa)) is the Protein kinase domain. ATP is bound by residues 651–659 (LGRGQYGVV) and K674. D770 acts as the Proton acceptor in catalysis.

Belongs to the protein kinase superfamily. Ser/Thr protein kinase family.

The protein resides in the cytoplasm. It localises to the cell membrane. The protein localises to the apical cell membrane. It is found in the basolateral cell membrane. Its subcellular location is the cell junction. It catalyses the reaction L-seryl-[protein] + ATP = O-phospho-L-seryl-[protein] + ADP + H(+). The catalysed reaction is L-threonyl-[protein] + ATP = O-phospho-L-threonyl-[protein] + ADP + H(+). It carries out the reaction L-tyrosyl-[protein] + ATP = O-phospho-L-tyrosyl-[protein] + ADP + H(+). May act as a positive regulator of ERK phosphorylation downstream of fibroblast growth factor-receptor activation. May induce both caspase-dependent apoptosis and caspase-independent cell death. May play a role in the embryonic development. The sequence is that of Dual serine/threonine and tyrosine protein kinase from Tetraodon nigroviridis (Spotted green pufferfish).